Here is a 410-residue protein sequence, read N- to C-terminus: Homeobox protein Hox-A3a (410 aa).

A disordered region spans residues 79 to 126; it reads VTDTSDNKQPPTAPSGPSSPSSLNQIPNIDSAAKNPVHVSPTPSTRKH. The Antp-type hexapeptide motif lies at 127-132; it reads IFPWMK. Residues 163 to 222 constitute a DNA-binding region (homeobox); sequence SKRARTAYTSAQLVELEKEFHFNRYLCRPRRVEMANLLNLTERQIKIWFQNRRMKYKKDQ. The segment at 222–249 is disordered; it reads QKGLGMMPSPGAQSPHSPVSLSSGGGGG.

The protein belongs to the Antp homeobox family.

It localises to the nucleus. Functionally, sequence-specific transcription factor which is part of a developmental regulatory system that provides cells with specific positional identities on the anterior-posterior axis. In Danio rerio (Zebrafish), this protein is Homeobox protein Hox-A3a (hoxa3a).